The primary structure comprises 1374 residues: DNA-directed RNA polymerase subunit beta (1374 aa).

This sequence belongs to the RNA polymerase beta chain family. The RNAP catalytic core consists of 2 alpha, 1 beta, 1 beta' and 1 omega subunit. When a sigma factor is associated with the core the holoenzyme is formed, which can initiate transcription.

It catalyses the reaction RNA(n) + a ribonucleoside 5'-triphosphate = RNA(n+1) + diphosphate. Functionally, DNA-dependent RNA polymerase catalyzes the transcription of DNA into RNA using the four ribonucleoside triphosphates as substrates. In Rhodopseudomonas palustris (strain BisB5), this protein is DNA-directed RNA polymerase subunit beta.